The sequence spans 80 residues: DNA-directed RNA polymerase RPB10 homolog (80 aa).

Zn(2+)-binding residues include Cys7, Cys10, Cys65, and Cys66.

This sequence belongs to the archaeal RpoN/eukaryotic RPB10 RNA polymerase subunit family. Part of the viral DNA-directed RNA polymerase that consists of 8 polII-like subunits (RPB1, RPB2, RPB3, RPB5, RPB6, RPB7, RPB9, RPB10), a capping enzyme and a termination factor.

The protein resides in the host cytoplasm. Its function is as follows. Component of the DNA-directed RNA polymerase (RNAP) that catalyzes the transcription in the cytoplasm of viral DNA into RNA using the four ribonucleoside triphosphates as substrates. The protein is DNA-directed RNA polymerase RPB10 homolog of African swine fever virus (isolate Pig/Kenya/KEN-50/1950) (ASFV).